The chain runs to 385 residues: ATP phosphoribosyltransferase regulatory subunit (385 aa).

Belongs to the class-II aminoacyl-tRNA synthetase family. HisZ subfamily. In terms of assembly, heteromultimer composed of HisG and HisZ subunits.

It localises to the cytoplasm. The protein operates within amino-acid biosynthesis; L-histidine biosynthesis; L-histidine from 5-phospho-alpha-D-ribose 1-diphosphate: step 1/9. In terms of biological role, required for the first step of histidine biosynthesis. May allow the feedback regulation of ATP phosphoribosyltransferase activity by histidine. This chain is ATP phosphoribosyltransferase regulatory subunit, found in Bordetella pertussis (strain Tohama I / ATCC BAA-589 / NCTC 13251).